The sequence spans 680 residues: Conserved oligomeric Golgi complex subunit 6 (680 aa).

The disordered stretch occupies residues 479–517 (HKSKKSGQLPRRSRTSSDSSQLTSVDALLSSSPSPPQNN).

The protein belongs to the COG6 family. In terms of assembly, component of the conserved oligomeric Golgi complex which is composed of eight different subunits and is required for normal Golgi morphology and localization. Interacts with COG5, COG7 and COG8.

The protein resides in the golgi apparatus membrane. In terms of biological role, required for normal Golgi function. The polypeptide is Conserved oligomeric Golgi complex subunit 6 (Arabidopsis thaliana (Mouse-ear cress)).